Consider the following 438-residue polypeptide: Thymidine phosphorylase (438 aa).

This sequence belongs to the thymidine/pyrimidine-nucleoside phosphorylase family. Homodimer.

It catalyses the reaction thymidine + phosphate = 2-deoxy-alpha-D-ribose 1-phosphate + thymine. Its pathway is pyrimidine metabolism; dTMP biosynthesis via salvage pathway; dTMP from thymine: step 1/2. In terms of biological role, the enzymes which catalyze the reversible phosphorolysis of pyrimidine nucleosides are involved in the degradation of these compounds and in their utilization as carbon and energy sources, or in the rescue of pyrimidine bases for nucleotide synthesis. The polypeptide is Thymidine phosphorylase (Burkholderia orbicola (strain MC0-3)).